The following is a 63-amino-acid chain: Bowman-Birk type proteinase inhibitor (63 aa).

7 disulfide bridges follow: cysteine 8–cysteine 61, cysteine 9–cysteine 24, cysteine 12–cysteine 57, cysteine 14–cysteine 22, cysteine 31–cysteine 38, cysteine 35–cysteine 50, and cysteine 40–cysteine 48.

The protein belongs to the Bowman-Birk serine protease inhibitor family.

Its function is as follows. This inhibitor has two domains, each with separate antiprotease activity. Inhibits bovine trypsin and chymotrypsin, in a molar ratio of 1:1. The trypsin inhibition of FBI is independent of chymotrypsin inhibition, but the chymotrypsin inhibition is not completely independent of trypsin inhibition. This is Bowman-Birk type proteinase inhibitor from Vicia faba (Broad bean).